A 470-amino-acid chain; its full sequence is Cysteine--tRNA ligase (470 aa).

Residue cysteine 28 participates in Zn(2+) binding. The short motif at 30 to 40 is the 'HIGH' region element; it reads PTVYNYIHIGN. Residues cysteine 212, histidine 237, and glutamate 241 each contribute to the Zn(2+) site. Residues 271–275 carry the 'KMSKS' region motif; it reads KMSKS. Residue lysine 274 participates in ATP binding.

Belongs to the class-I aminoacyl-tRNA synthetase family. In terms of assembly, monomer. It depends on Zn(2+) as a cofactor.

Its subcellular location is the cytoplasm. It carries out the reaction tRNA(Cys) + L-cysteine + ATP = L-cysteinyl-tRNA(Cys) + AMP + diphosphate. The polypeptide is Cysteine--tRNA ligase (Ligilactobacillus salivarius (strain UCC118) (Lactobacillus salivarius)).